The following is a 438-amino-acid chain: MPISKIHARSVYDSRGNPTVEVDVVTETGLHRAIVPSGASTGQHEAHELRDGDKTQWGGKGVLKAVKNVNETIGPALIKENIDVKDQSKVDEFLNKLDGTANKSNLGANAILGVSLAVAKAGAAEKGVPLYAHISDLAGTKKPYVLPVPFQNVLNGGSHAGGRLAFQEFMIVPDSAPSFSEALRQGAEVYQKLKALAKKKYGQSAGNVGDEGGVAPDIQTAEEALDLITEAIEQAGYTGKIKIAMDVASSEFYKADVKKYDLDFKNPESDPSKWLTYEQLADLYKSLAAKYPIVSIEDPFAEDDWEAWSYFYKTSDFQIVGDDLTVTNPGRIKKAIELKSCNALLLKVNQIGTLTESIQAAKDSYADNWGVMVSHRSGETEDVTIADIAVGLRSGQIKTGAPCRSERLAKLNQILRIEEELGENAVYAGSKFRTAVNL.

His159 and Glu168 together coordinate substrate. Residue Glu211 is the Proton donor of the active site. Mg(2+) is bound by residues Asp246, Glu297, and Asp322. Substrate is bound by residues Glu297 and Asp322. Catalysis depends on Lys347, which acts as the Proton acceptor. Residues 374–377 and Lys398 contribute to the substrate site; that span reads SHRS.

This sequence belongs to the enolase family. In terms of assembly, homodimer. The cofactor is Mg(2+).

It is found in the cytoplasm. The catalysed reaction is (2R)-2-phosphoglycerate = phosphoenolpyruvate + H2O. Its pathway is carbohydrate degradation; glycolysis; pyruvate from D-glyceraldehyde 3-phosphate: step 4/5. This is Enolase (enoA) from Aspergillus fumigatus (strain ATCC MYA-4609 / CBS 101355 / FGSC A1100 / Af293) (Neosartorya fumigata).